Reading from the N-terminus, the 161-residue chain is Nucleotide-binding protein Bphy_0527 (161 aa).

Belongs to the YajQ family.

Nucleotide-binding protein. This chain is Nucleotide-binding protein Bphy_0527, found in Paraburkholderia phymatum (strain DSM 17167 / CIP 108236 / LMG 21445 / STM815) (Burkholderia phymatum).